The chain runs to 622 residues: Low affinity potassium transport system protein Kup (622 aa).

Transmembrane regions (helical) follow at residues 9 to 29 (LPAI…TSPL), 49 to 69 (VFGF…IKYL), 103 to 123 (VIMG…TPAI), 137 to 157 (PQLD…LFMI), 165 to 185 (VGKL…GLGL), 213 to 233 (VSFI…ALYA), 247 to 267 (WFTV…ALLL), 276 to 296 (PFFL…AALA), 337 to 357 (IYIP…IVSF), 363 to 383 (LAAA…ILST), 396 to 416 (FVAL…TANL), and 419 to 439 (LLSG…VMTT).

Belongs to the HAK/KUP transporter (TC 2.A.72) family.

It localises to the cell inner membrane. The catalysed reaction is K(+)(in) + H(+)(in) = K(+)(out) + H(+)(out). Functionally, responsible for the low-affinity transport of potassium into the cell. Likely operates as a K(+):H(+) symporter. The chain is Low affinity potassium transport system protein Kup from Shigella boydii serotype 18 (strain CDC 3083-94 / BS512).